Consider the following 207-residue polypeptide: Ion-translocating oxidoreductase complex subunit G (207 aa).

A helical transmembrane segment spans residues 11–31; sequence GILLGFIALLCTIISAGIFFL. T175 is subject to FMN phosphoryl threonine.

It belongs to the RnfG family. The complex is composed of six subunits: RnfA, RnfB, RnfC, RnfD, RnfE and RnfG. FMN serves as cofactor.

The protein localises to the cell inner membrane. Part of a membrane-bound complex that couples electron transfer with translocation of ions across the membrane. This Haemophilus influenzae (strain ATCC 51907 / DSM 11121 / KW20 / Rd) protein is Ion-translocating oxidoreductase complex subunit G.